The primary structure comprises 230 residues: 5'-methylthioadenosine/S-adenosylhomocysteine nucleosidase (230 aa).

Residue Glu-12 is the Proton acceptor of the active site. Residues Gly-78, Met-153, and 174-175 each bind substrate; that span reads ME. Asp-198 serves as the catalytic Proton donor.

This sequence belongs to the PNP/UDP phosphorylase family. MtnN subfamily.

The enzyme catalyses S-adenosyl-L-homocysteine + H2O = S-(5-deoxy-D-ribos-5-yl)-L-homocysteine + adenine. The catalysed reaction is S-methyl-5'-thioadenosine + H2O = 5-(methylsulfanyl)-D-ribose + adenine. It carries out the reaction 5'-deoxyadenosine + H2O = 5-deoxy-D-ribose + adenine. Its pathway is amino-acid biosynthesis; L-methionine biosynthesis via salvage pathway; S-methyl-5-thio-alpha-D-ribose 1-phosphate from S-methyl-5'-thioadenosine (hydrolase route): step 1/2. In terms of biological role, catalyzes the irreversible cleavage of the glycosidic bond in both 5'-methylthioadenosine (MTA) and S-adenosylhomocysteine (SAH/AdoHcy) to adenine and the corresponding thioribose, 5'-methylthioribose and S-ribosylhomocysteine, respectively. Also cleaves 5'-deoxyadenosine, a toxic by-product of radical S-adenosylmethionine (SAM) enzymes, into 5-deoxyribose and adenine. The chain is 5'-methylthioadenosine/S-adenosylhomocysteine nucleosidase from Tolumonas auensis (strain DSM 9187 / NBRC 110442 / TA 4).